Consider the following 756-residue polypeptide: Tubulin glycylase 3B (756 aa).

The disordered stretch occupies residues 104–123 (TPLPRTVTSSPTAPEAQKRQ). Residues 272–629 (LEERMAFIED…DLPKNPTAAT (358 aa)) enclose the TTL domain. ATP is bound by residues 440–443 (QKYI), Lys453, and Asp455. A disordered region spans residues 709 to 736 (ITKKKKLSASAGSSTAASAQPSTQNLTT). A compositionally biased stretch (low complexity) spans 716–727 (SASAGSSTAASA).

The protein resides in the cytoplasm. The protein localises to the cytoskeleton. It localises to the nucleus. Essential glycylase which modifies both tubulin and non-tubulin proteins, generating side chains of glycine on the gamma-carboxyl groups of specific glutamate residues of target proteins. Monoglycylates alpha-tubulin by adding a single glycine chain to generate monoglycine side chains, but is not involved in elongation step to generate polyglycine side chains on alpha-tubulin. Has the ability to both mono- and polyglycylate non-tubulin proteins such as up (Troponin T). Required for early steps of spermatogenesis. This chain is Tubulin glycylase 3B (TTLL3B), found in Drosophila melanogaster (Fruit fly).